A 401-amino-acid polypeptide reads, in one-letter code: Argininosuccinate synthase (401 aa).

ATP is bound by residues 10 to 18 and A38; that span reads AYSGGVDTS. Y89 lines the L-citrulline pocket. G119 contacts ATP. Residues T121, N125, and D126 each contribute to the L-aspartate site. Position 125 (N125) interacts with L-citrulline. The L-citrulline site is built by R129, S177, S186, E262, and Y274.

It belongs to the argininosuccinate synthase family. Type 1 subfamily. Homotetramer.

It is found in the cytoplasm. The enzyme catalyses L-citrulline + L-aspartate + ATP = 2-(N(omega)-L-arginino)succinate + AMP + diphosphate + H(+). Its pathway is amino-acid biosynthesis; L-arginine biosynthesis; L-arginine from L-ornithine and carbamoyl phosphate: step 2/3. This is Argininosuccinate synthase from Synechococcus sp. (strain CC9311).